We begin with the raw amino-acid sequence, 211 residues long: Ribosomal RNA large subunit methyltransferase E (211 aa).

The S-adenosyl-L-methionine site is built by G55, W57, D75, D93, and D117. The active-site Proton acceptor is K157.

This sequence belongs to the class I-like SAM-binding methyltransferase superfamily. RNA methyltransferase RlmE family.

It is found in the cytoplasm. The enzyme catalyses uridine(2552) in 23S rRNA + S-adenosyl-L-methionine = 2'-O-methyluridine(2552) in 23S rRNA + S-adenosyl-L-homocysteine + H(+). In terms of biological role, specifically methylates the uridine in position 2552 of 23S rRNA at the 2'-O position of the ribose in the fully assembled 50S ribosomal subunit. The polypeptide is Ribosomal RNA large subunit methyltransferase E (Methanothermobacter thermautotrophicus (strain ATCC 29096 / DSM 1053 / JCM 10044 / NBRC 100330 / Delta H) (Methanobacterium thermoautotrophicum)).